Reading from the N-terminus, the 83-residue chain is MAGTTGERPFSDILTSIRYWVIHSITIPSLFIAGWLFVSTGLAYDVFGTPRPNEYFTEDRQEAPLITDRFNSLEQVKKLSNIR.

Residues 21-35 form a helical membrane-spanning segment; the sequence is VIHSITIPSLFIAGW. His23 serves as a coordination point for heme.

It belongs to the PsbE/PsbF family. As to quaternary structure, heterodimer of an alpha subunit and a beta subunit. PSII is composed of 1 copy each of membrane proteins PsbA, PsbB, PsbC, PsbD, PsbE, PsbF, PsbH, PsbI, PsbJ, PsbK, PsbL, PsbM, PsbT, PsbX, PsbY, PsbZ, Psb30/Ycf12, at least 3 peripheral proteins of the oxygen-evolving complex and a large number of cofactors. It forms dimeric complexes. Requires heme b as cofactor.

The protein localises to the plastid. It localises to the chloroplast thylakoid membrane. In terms of biological role, this b-type cytochrome is tightly associated with the reaction center of photosystem II (PSII). PSII is a light-driven water:plastoquinone oxidoreductase that uses light energy to abstract electrons from H(2)O, generating O(2) and a proton gradient subsequently used for ATP formation. It consists of a core antenna complex that captures photons, and an electron transfer chain that converts photonic excitation into a charge separation. The polypeptide is Cytochrome b559 subunit alpha (Tupiella akineta (Green alga)).